Reading from the N-terminus, the 144-residue chain is MLLPKRVKYRRQHRPKTTGRSKGGNFVTFGEYGLQAITTSWITSRQIESARIAMTRYMKRGGKVWIKIFPHTPYTKKPLEVRMGAGKGAVEGWIAVVKPGRILFEVAGVSEEVAREALRLASHKLPVKTKFVKREELGGESNES.

Over residues 1–19 (MLLPKRVKYRRQHRPKTTG) the composition is skewed to basic residues. The interval 1–23 (MLLPKRVKYRRQHRPKTTGRSKG) is disordered.

It belongs to the universal ribosomal protein uL16 family. In terms of assembly, part of the 50S ribosomal subunit.

Functionally, binds 23S rRNA and is also seen to make contacts with the A and possibly P site tRNAs. The protein is Large ribosomal subunit protein uL16 of Staphylococcus carnosus (strain TM300).